The primary structure comprises 417 residues: 4-hydroxy-3-methylbut-2-en-1-yl diphosphate synthase (flavodoxin) (417 aa).

[4Fe-4S] cluster is bound by residues Cys-305, Cys-308, Cys-351, and Glu-358.

The protein belongs to the IspG family. It depends on [4Fe-4S] cluster as a cofactor.

The catalysed reaction is (2E)-4-hydroxy-3-methylbut-2-enyl diphosphate + oxidized [flavodoxin] + H2O + 2 H(+) = 2-C-methyl-D-erythritol 2,4-cyclic diphosphate + reduced [flavodoxin]. The protein operates within isoprenoid biosynthesis; isopentenyl diphosphate biosynthesis via DXP pathway; isopentenyl diphosphate from 1-deoxy-D-xylulose 5-phosphate: step 5/6. Converts 2C-methyl-D-erythritol 2,4-cyclodiphosphate (ME-2,4cPP) into 1-hydroxy-2-methyl-2-(E)-butenyl 4-diphosphate. The chain is 4-hydroxy-3-methylbut-2-en-1-yl diphosphate synthase (flavodoxin) from Nitrosomonas europaea (strain ATCC 19718 / CIP 103999 / KCTC 2705 / NBRC 14298).